We begin with the raw amino-acid sequence, 652 residues long: MAPSSLLLSVGSLITSSLVSATALEARQSQTYQLAESWQGESFINDWNFFDGADPTNGYVTYVNQSFAKQSGLVKVTESGSFYMGVDYESTLNPNGAGRESVRIESKNYYTEGLYVIDIEHMPGSICGTWPAFWSVGKNWPNDGEIDIIEGVNLQKANKIVLHTSGSCDVSGSNDMTGTLSSSECGEASGTVGCVVKGTNGSSGDPFNESGGGVYAMEWTDTFIKIWFFPRSQIPASLASGNPDTSSFGTPMAHLQGSCDFAERFKAQKLIIDTTFCGDWAGNVFAESTCPMSDPSSPMQSCVNYVAQNPAAFKEAYWEINSIKIYQYGVSAASSAAVSQATASKVEGTRVSAQAANTATPTVPAPVETTTVPQPAQTNTVATSAADHATPSSAETTTVPAATGAPSVSATEGGDSELESTSTVYVTSTTTICPVAESSSAAAAGGKEDAPSNGTSGAEVAATSVAAAAPAAATSGHPGADAIANSAAATSTDAQSESATSRLTAGALSEIPTAPPEPVSQAVSTGSFDDSDTAQGDSEEQGSIASASVAPSTIPVPASSSAAALGGSSIASSFASSRLIPRPTGSSTAASATAIATWSPTAGESASGTAKESATLTTPSEVFFTPGLSNGANRMSVGLSGLIGVMFIAALA.

A signal peptide spans Met1 to Ala21. A GH16 domain is found at Glu36–Thr289. Asn64 carries N-linked (GlcNAc...) asparagine glycosylation. Glu145 acts as the Nucleophile in catalysis. Glu150 functions as the Proton donor in the catalytic mechanism. N-linked (GlcNAc...) asparagine glycosylation is found at Asn200 and Asn208. The disordered stretch occupies residues Asn379–Thr423. The segment covering Thr390–Ala410 has biased composition (polar residues). N-linked (GlcNAc...) asparagine glycosylation occurs at Asn453. The interval Ser509–Pro551 is disordered. Acidic residues predominate over residues Asp529 to Glu540. The GPI-anchor amidated asparagine moiety is linked to residue Asn630. Residues Gly631–Ala652 constitute a propeptide, removed in mature form.

The protein belongs to the glycosyl hydrolase 16 family.

Its subcellular location is the cell membrane. It carries out the reaction Endohydrolysis of (1-&gt;3)- or (1-&gt;4)-linkages in beta-D-glucans when the glucose residue whose reducing group is involved in the linkage to be hydrolyzed is itself substituted at C-3.. Mixed-linked glucanase involved in the degradation of complex natural cellulosic substrates. This Aspergillus fumigatus (strain CBS 144.89 / FGSC A1163 / CEA10) (Neosartorya fumigata) protein is Probable endo-1,3(4)-beta-glucanase AFUB_029980.